We begin with the raw amino-acid sequence, 155 residues long: Small ribosomal subunit protein uS7c (155 aa).

It belongs to the universal ribosomal protein uS7 family. Part of the 30S ribosomal subunit.

Its subcellular location is the plastid. It is found in the chloroplast. One of the primary rRNA binding proteins, it binds directly to 16S rRNA where it nucleates assembly of the head domain of the 30S subunit. This Dioscorea bulbifera (Air potato) protein is Small ribosomal subunit protein uS7c (rps7).